Consider the following 225-residue polypeptide: NAD(P)H-quinone oxidoreductase subunit K, chloroplastic (225 aa).

The [4Fe-4S] cluster site is built by Cys43, Cys44, Cys108, and Cys139.

Belongs to the complex I 20 kDa subunit family. NDH is composed of at least 16 different subunits, 5 of which are encoded in the nucleus. [4Fe-4S] cluster serves as cofactor.

It localises to the plastid. Its subcellular location is the chloroplast thylakoid membrane. It carries out the reaction a plastoquinone + NADH + (n+1) H(+)(in) = a plastoquinol + NAD(+) + n H(+)(out). The catalysed reaction is a plastoquinone + NADPH + (n+1) H(+)(in) = a plastoquinol + NADP(+) + n H(+)(out). Its function is as follows. NDH shuttles electrons from NAD(P)H:plastoquinone, via FMN and iron-sulfur (Fe-S) centers, to quinones in the photosynthetic chain and possibly in a chloroplast respiratory chain. The immediate electron acceptor for the enzyme in this species is believed to be plastoquinone. Couples the redox reaction to proton translocation, and thus conserves the redox energy in a proton gradient. This is NAD(P)H-quinone oxidoreductase subunit K, chloroplastic from Arabis hirsuta (Hairy rock-cress).